Consider the following 174-residue polypeptide: Scytalone dehydratase-like protein Arp1 (174 aa).

A substrate-binding site is contributed by tyrosine 49. Residues histidine 84 and histidine 109 contribute to the active site. Asparagine 130 serves as a coordination point for substrate.

The protein belongs to the scytalone dehydratase family. As to quaternary structure, homotrimer. Each subunit contains an active site, located in the central part of the hydrophobic core of the monomer, which functions independently.

Scytalone dehydratase-like protein; part of the Pks2 gene cluster that mediates the formation of infectious structures (appressoria), enabling these fungi to kill insects faster. The product of the Pks2 gene cluster is different from the one of Pks1 and has still not been identified. The protein is Scytalone dehydratase-like protein Arp1 of Metarhizium majus (strain ARSEF 297).